The sequence spans 103 residues: Sec-independent protein translocase protein TatA (103 aa).

The helical transmembrane segment at 1 to 21 (MGNIFSPTHLIVILLIVLVLF) threads the bilayer. Residues 60 to 103 (YSKTTDVRPQQSQPLSVKRAAERRKGSSSFKEGKASVAKKQRGK) form a disordered region.

This sequence belongs to the TatA/E family. In terms of assembly, the Tat system comprises two distinct complexes: a TatABC complex, containing multiple copies of TatA, TatB and TatC subunits, and a separate TatA complex, containing only TatA subunits. Substrates initially bind to the TatABC complex, which probably triggers association of the separate TatA complex to form the active translocon.

The protein localises to the cell inner membrane. Its function is as follows. Part of the twin-arginine translocation (Tat) system that transports large folded proteins containing a characteristic twin-arginine motif in their signal peptide across membranes. TatA could form the protein-conducting channel of the Tat system. This is Sec-independent protein translocase protein TatA from Bartonella quintana (strain Toulouse) (Rochalimaea quintana).